The chain runs to 720 residues: Mitogen-activated protein kinase 6 (720 aa).

Residue Met1 forms a Peptide (Met-Gly) (interchain with G-Cter in ubiquitin) linkage. Residues 20-316 (YMDLKPLGCG…AEEALSHPYM (297 aa)) form the Protein kinase domain. Residues 26-34 (LGCGGNGLV) and Lys49 contribute to the ATP site. The active-site Proton acceptor is the Asp152. A Phosphoserine; by PAK1, PAK2 and PAK3 modification is found at Ser189. An SEG motif motif is present at residues 189 to 191 (SEG). An FRIEDE motif motif is present at residues 332 to 337 (FHIEDE). 3 positions are modified to phosphoserine: Ser386, Ser554, and Ser556. The segment at 638-657 (SEMLETEPVEEGKRGERGRE) is disordered. The segment covering 647–657 (EEGKRGERGRE) has biased composition (basic and acidic residues). The residue at position 683 (Ser683) is a Phosphoserine. The segment covering 700 to 714 (AMKSSPQIPHKTYSS) has biased composition (polar residues). Residues 700-720 (AMKSSPQIPHKTYSSILKHLN) are disordered.

Belongs to the protein kinase superfamily. CMGC Ser/Thr protein kinase family. MAP kinase subfamily. As to quaternary structure, heterodimer with ERK4/MAPK4. Interacts with (via FRIEDE motif) MAPKAPK5. Interacts with UBE3A; this interaction may be indirect and mediated by HERC2, possibly via HERC2 interaction with NEURL4. Requires Mg(2+) as cofactor. Post-translationally, phosphorylated at Ser-189 by PAK1, PAK2 and PAK3 resulting in catalytic activation. Phosphorylated by MAPKAPK5 at other sites. Ubiquitination at Met-1 leads to degradation by the proteasome pathway.

The protein localises to the cytoplasm. The protein resides in the nucleus. The enzyme catalyses L-seryl-[protein] + ATP = O-phospho-L-seryl-[protein] + ADP + H(+). It carries out the reaction L-threonyl-[protein] + ATP = O-phospho-L-threonyl-[protein] + ADP + H(+). With respect to regulation, activated by phosphorylation at Ser-189. Atypical MAPK protein. Phosphorylates microtubule-associated protein 2 (MAP2) and MAPKAPK5. The precise role of the complex formed with MAPKAPK5 is still unclear, but the complex follows a complex set of phosphorylation events: upon interaction with atypical MAPKAPK5, ERK3/MAPK6 is phosphorylated at Ser-189 and then mediates phosphorylation and activation of MAPKAPK5, which in turn phosphorylates ERK3/MAPK6. May promote entry in the cell cycle. This is Mitogen-activated protein kinase 6 (Mapk6) from Mus musculus (Mouse).